Consider the following 567-residue polypeptide: Protein ESMERALDA 1 (567 aa).

Positions 1 to 41 (MLAKNRLPGSGHTTPSPPASPRRSPRYRHGRSKAAAGSRFP) are disordered. At 1–65 (MLAKNRLPGS…ILLSVLLRRQ (65 aa)) the chain is on the cytoplasmic side. Residues 23 to 32 (RSPRYRHGRS) are compositionally biased toward basic residues. Residues 66-86 (GIFLFAPLIYISCMLLYMGTV) traverse the membrane as a helical; Signal-anchor for type II membrane protein segment. Residues 87-567 (SFDVVPIIQR…TPESRPPPAT (481 aa)) are Lumenal-facing. N-linked (GlcNAc...) asparagine glycosylation is found at Asn-121, Asn-145, Asn-184, and Asn-238. Residue 331 to 333 (HLR) participates in substrate binding. Asn-403, Asn-419, Asn-449, Asn-538, and Asn-554 each carry an N-linked (GlcNAc...) asparagine glycan.

It belongs to the glycosyltransferase GT106 family. As to expression, ubiquitous.

It is found in the golgi apparatus membrane. It functions in the pathway protein modification; protein glycosylation. Glycosyltransferase that plays a role in cell adhesion. The sequence is that of Protein ESMERALDA 1 from Arabidopsis thaliana (Mouse-ear cress).